The primary structure comprises 471 residues: Glutamate--tRNA ligase (471 aa).

The short motif at 9–19 (PSPTGYLHVGG) is the 'HIGH' region element. Residues cysteine 98, cysteine 100, cysteine 125, and histidine 127 each coordinate Zn(2+). Positions 237–241 (KLSKR) match the 'KMSKS' region motif. Lysine 240 serves as a coordination point for ATP.

Belongs to the class-I aminoacyl-tRNA synthetase family. Glutamate--tRNA ligase type 1 subfamily. Monomer. Zn(2+) is required as a cofactor.

It localises to the cytoplasm. It catalyses the reaction tRNA(Glu) + L-glutamate + ATP = L-glutamyl-tRNA(Glu) + AMP + diphosphate. Functionally, catalyzes the attachment of glutamate to tRNA(Glu) in a two-step reaction: glutamate is first activated by ATP to form Glu-AMP and then transferred to the acceptor end of tRNA(Glu). This is Glutamate--tRNA ligase from Escherichia coli (strain SMS-3-5 / SECEC).